Here is a 139-residue protein sequence, read N- to C-terminus: I-Kappa-B like protein N1 (139 aa).

ANK repeat units follow at residues 16-48 (NGENLLHAMCRHGNSLALSIIAQSINKNYQYLL), 54-87 (EGRKCIHIAAVMHKGQVATELIIILLNFGADVNG), and 92-122 (TGDTVLHIAVYLKDYYLAEWLCRRSGININA).

It belongs to the polydnaviridae I-Kappa-B-like protein family.

In terms of biological role, suppresses the host immune response through NF-kappa-B inactivation. Possesses ankyrin repeat domain required for NF-kappa-B binding but lack the regulatory regions required for dissociation from NF-kappa-B and degradation. Therefore, prevents host NF-kappa-B release and subsequent activation. The sequence is that of I-Kappa-B like protein N1 (N2) from Microplitis demolitor bracovirus (isolate Webb) (MdBV).